The following is a 166-amino-acid chain: Lipoprotein signal peptidase (166 aa).

4 helical membrane-spanning segments follow: residues 9 to 29 (ASGA…FDQL), 45 to 65 (ALTS…FGFL), 71 to 91 (WQRW…CFLL), and 100 to 120 (FSVS…DRLV). Active-site residues include Asp126 and Asp144. A helical transmembrane segment spans residues 135–155 (WHFPAFNLADSAITVGAVLLI).

The protein belongs to the peptidase A8 family.

It is found in the cell inner membrane. The enzyme catalyses Release of signal peptides from bacterial membrane prolipoproteins. Hydrolyzes -Xaa-Yaa-Zaa-|-(S,diacylglyceryl)Cys-, in which Xaa is hydrophobic (preferably Leu), and Yaa (Ala or Ser) and Zaa (Gly or Ala) have small, neutral side chains.. Its pathway is protein modification; lipoprotein biosynthesis (signal peptide cleavage). Functionally, this protein specifically catalyzes the removal of signal peptides from prolipoproteins. In Burkholderia cenocepacia (strain HI2424), this protein is Lipoprotein signal peptidase.